We begin with the raw amino-acid sequence, 236 residues long: tRNA (guanine-N(7)-)-methyltransferase (236 aa).

Residues glutamate 43, aspartate 68, asparagine 102, and asparagine 125 each contribute to the S-adenosyl-L-methionine site. The substrate site is built by lysine 129 and aspartate 161.

It belongs to the class I-like SAM-binding methyltransferase superfamily. TrmB family.

It catalyses the reaction guanosine(46) in tRNA + S-adenosyl-L-methionine = N(7)-methylguanosine(46) in tRNA + S-adenosyl-L-homocysteine. It functions in the pathway tRNA modification; N(7)-methylguanine-tRNA biosynthesis. In terms of biological role, catalyzes the formation of N(7)-methylguanine at position 46 (m7G46) in tRNA. This is tRNA (guanine-N(7)-)-methyltransferase from Ruminiclostridium cellulolyticum (strain ATCC 35319 / DSM 5812 / JCM 6584 / H10) (Clostridium cellulolyticum).